A 133-amino-acid chain; its full sequence is NADPH-dependent 7-cyano-7-deazaguanine reductase (133 aa).

The Thioimide intermediate role is filled by Cys49. Asp56 (proton donor) is an active-site residue. Substrate contacts are provided by residues 71–73 (IEL) and 90–91 (HE).

It belongs to the GTP cyclohydrolase I family. QueF type 1 subfamily.

The protein resides in the cytoplasm. It carries out the reaction 7-aminomethyl-7-carbaguanine + 2 NADP(+) = 7-cyano-7-deazaguanine + 2 NADPH + 3 H(+). Its pathway is tRNA modification; tRNA-queuosine biosynthesis. Functionally, catalyzes the NADPH-dependent reduction of 7-cyano-7-deazaguanine (preQ0) to 7-aminomethyl-7-deazaguanine (preQ1). In Leptospira borgpetersenii serovar Hardjo-bovis (strain JB197), this protein is NADPH-dependent 7-cyano-7-deazaguanine reductase.